The sequence spans 542 residues: Chaperonin GroEL 4 (542 aa).

ATP-binding positions include 30–33, Lys51, 87–91, Gly415, and Asp496; these read TLGP and DGTTT.

The protein belongs to the chaperonin (HSP60) family. In terms of assembly, forms a cylinder of 14 subunits composed of two heptameric rings stacked back-to-back. Interacts with the co-chaperonin GroES.

It localises to the cytoplasm. The catalysed reaction is ATP + H2O + a folded polypeptide = ADP + phosphate + an unfolded polypeptide.. Functionally, together with its co-chaperonin GroES, plays an essential role in assisting protein folding. The GroEL-GroES system forms a nano-cage that allows encapsulation of the non-native substrate proteins and provides a physical environment optimized to promote and accelerate protein folding. The polypeptide is Chaperonin GroEL 4 (Rhizobium etli (strain ATCC 51251 / DSM 11541 / JCM 21823 / NBRC 15573 / CFN 42)).